Here is a 284-residue protein sequence, read N- to C-terminus: MKKLTTLLLASTLLIAACGNDDSKKDDSKTSKKDDGVKAELKQATKAYDKYTDEQLNEFLKGTEKFVKAIENNDMAQAKALYPKVRMYYERSEPVAEAFGDLDPKIDARLADMKEEKKEKEWSGYHKIEKALYEDKKIDDVTKKDAQQLLKDAKELHAKADTLDITPKLMLQGSVDLLNEVATSKITGEEEIYSHTDLYDFKANVEGAQKIYDLFKPILEKKDKKLSDDIQMNFDKVNQLLDKYKDNNGGYESFEKVSKKDRKAFADAVNALGEPLSKMAVITE.

The first 17 residues, 1-17 (MKKLTTLLLASTLLIAA), serve as a signal peptide directing secretion. C18 is lipidated: N-palmitoyl cysteine. C18 is lipidated: S-diacylglycerol cysteine.

Belongs to the EfeM/EfeO family.

Its subcellular location is the cell membrane. This chain is Efem/EfeO family lipoprotein, found in Staphylococcus aureus (strain NCTC 8325 / PS 47).